A 120-amino-acid chain; its full sequence is Alanine racemase (120 aa).

Catalysis depends on tyrosine 24, which acts as the Proton acceptor; specific for L-alanine.

The protein belongs to the alanine racemase family. Homodimer. The cofactor is pyridoxal 5'-phosphate.

The catalysed reaction is L-alanine = D-alanine. Functionally, highly specific to D- and L-alanine and does not catalyze the racemization of other amino acids. The chain is Alanine racemase from Penaeus monodon (Giant tiger prawn).